The primary structure comprises 400 residues: Argininosuccinate synthase (400 aa).

9–17 (AYSGGLDTS) contributes to the ATP binding site. L-citrulline is bound at residue Y87. ATP is bound at residue G117. L-aspartate is bound by residues T119, N123, and D124. An L-citrulline-binding site is contributed by N123. L-citrulline contacts are provided by R127, S176, S185, E261, and Y273.

Belongs to the argininosuccinate synthase family. Type 1 subfamily. In terms of assembly, homotetramer.

It is found in the cytoplasm. The enzyme catalyses L-citrulline + L-aspartate + ATP = 2-(N(omega)-L-arginino)succinate + AMP + diphosphate + H(+). It participates in amino-acid biosynthesis; L-arginine biosynthesis; L-arginine from L-ornithine and carbamoyl phosphate: step 2/3. The sequence is that of Argininosuccinate synthase from Chlorobium phaeobacteroides (strain DSM 266 / SMG 266 / 2430).